Reading from the N-terminus, the 188-residue chain is Casparian strip membrane protein 1 (188 aa).

Residues 1–24 lie on the Cytoplasmic side of the membrane; that stretch reads MKAGALELGHASKTTKSGVNRGMS. A helical membrane pass occupies residues 25 to 45; the sequence is ILDLFIRIIAIIATLGSAIAM. Topologically, residues 46–72 are extracellular; it reads GTTNETLPFFTQFVRFKAKYSDLPTFT. N49 carries an N-linked (GlcNAc...) asparagine glycan. The helical transmembrane segment at 73-93 threads the bilayer; the sequence is FFVVANAIVSAYLVLSLGLSI. The Cytoplasmic segment spans residues 94-105; it reads YHIMRSRAQATR. The chain crosses the membrane as a helical span at residues 106-126; the sequence is IALIFFDAAMLGLLTGGASAS. The Extracellular segment spans residues 127-159; the sequence is AAIVYLAHKGNRKTNWFPICQQYDSFCHRTSGS. Residues 160–180 traverse the membrane as a helical segment; the sequence is LVGSFAGSVLIILLIFLSAIA. Residues 181–188 lie on the Cytoplasmic side of the membrane; it reads LSRQSLNH.

Belongs to the Casparian strip membrane proteins (CASP) family. In terms of assembly, homodimer and heterodimers.

It localises to the cell membrane. Functionally, regulates membrane-cell wall junctions and localized cell wall deposition. Required for establishment of the Casparian strip membrane domain (CSD) and the subsequent formation of Casparian strips, a cell wall modification of the root endodermis that determines an apoplastic barrier between the intraorganismal apoplasm and the extraorganismal apoplasm and prevents lateral diffusion. In Solanum tuberosum (Potato), this protein is Casparian strip membrane protein 1.